The chain runs to 400 residues: MAKAKYERTKPHLNIGTIGHIDHGKTTLTAAITKTLSQVGGAKATSYEEIDKAPEERERGITINTSHVEYQTETRHYAHVDCPGHADYIKNMITGAAQMDGSILVVSAADGPMPQTREHILLSRQVGVPYIVVFMNKIDMVDDPELLELVEMEVRELLSFYEFPGDDIPVLMGSALKALECGCGTRECEWCKHIWELMDAVDSYIPLPQRAVDKPFLMPIEDVFTITGRGTVTTGRVERGQVKVGDEVEIVGMREATRKTVCTGVEMFRKLLDYAEAGDNIGTLLRGVDRKEVERGMVLAKPGSIKPLTAFNAEVYVLTKEEGGRHTPFFGGYRPQFYFRTTDVTGIIQLPEGVEMVMPGDNVQMAIELITPIAIEEGLRFAIREGGRTVGAGVVTSLNE.

The tr-type G domain occupies 10 to 209 (KPHLNIGTIG…AVDSYIPLPQ (200 aa)). The segment at 19–26 (GHIDHGKT) is G1. A GTP-binding site is contributed by 19–26 (GHIDHGKT). Threonine 26 provides a ligand contact to Mg(2+). The tract at residues 60-64 (GITIN) is G2. A G3 region spans residues 81-84 (DCPG). GTP contacts are provided by residues 81–85 (DCPGH) and 136–139 (NKID). The interval 136-139 (NKID) is G4. The interval 174-176 (SAL) is G5.

The protein belongs to the TRAFAC class translation factor GTPase superfamily. Classic translation factor GTPase family. EF-Tu/EF-1A subfamily. As to quaternary structure, monomer.

Its subcellular location is the cytoplasm. It catalyses the reaction GTP + H2O = GDP + phosphate + H(+). Functionally, GTP hydrolase that promotes the GTP-dependent binding of aminoacyl-tRNA to the A-site of ribosomes during protein biosynthesis. The chain is Elongation factor Tu 2 from Syntrophomonas wolfei subsp. wolfei (strain DSM 2245B / Goettingen).